The chain runs to 573 residues: Glutamate--tRNA ligase (573 aa).

The 'HIGH' region signature appears at 106 to 116; sequence PNPDGAFHLGN.

The protein belongs to the class-I aminoacyl-tRNA synthetase family. Glutamate--tRNA ligase type 2 subfamily.

The protein resides in the cytoplasm. The catalysed reaction is tRNA(Glu) + L-glutamate + ATP = L-glutamyl-tRNA(Glu) + AMP + diphosphate. In terms of biological role, catalyzes the attachment of glutamate to tRNA(Glu) in a two-step reaction: glutamate is first activated by ATP to form Glu-AMP and then transferred to the acceptor end of tRNA(Glu). The protein is Glutamate--tRNA ligase of Thermococcus onnurineus (strain NA1).